Here is a 100-residue protein sequence, read N- to C-terminus: Ubiquitin-related modifier 1 homolog (100 aa).

Gly100 is subject to 1-thioglycine. Gly100 is covalently cross-linked (Glycyl lysine isopeptide (Gly-Lys) (interchain with K-? in acceptor proteins)).

The protein belongs to the URM1 family. Post-translationally, C-terminal thiocarboxylation occurs in 2 steps, it is first acyl-adenylated (-COAMP) via the hesA/moeB/thiF part of the MOCS3 homolog, then thiocarboxylated (-COSH) via the rhodanese domain of the MOCS3 homolog.

Its subcellular location is the cytoplasm. The protein operates within tRNA modification; 5-methoxycarbonylmethyl-2-thiouridine-tRNA biosynthesis. Acts as a sulfur carrier required for 2-thiolation of mcm(5)S(2)U at tRNA wobble positions of cytosolic tRNA(Lys), tRNA(Glu) and tRNA(Gln). Serves as sulfur donor in tRNA 2-thiolation reaction by being thiocarboxylated (-COSH) at its C-terminus by MOCS3. The sulfur is then transferred to tRNA to form 2-thiolation of mcm(5)S(2)U. Also acts as a ubiquitin-like protein (UBL) that is covalently conjugated via an isopeptide bond to lysine residues of target proteins. The thiocarboxylated form serves as substrate for conjugation and oxidative stress specifically induces the formation of UBL-protein conjugates. This Oryza sativa subsp. japonica (Rice) protein is Ubiquitin-related modifier 1 homolog.